A 580-amino-acid chain; its full sequence is Pentatricopeptide repeat-containing protein At5g10690 (580 aa).

9 PPR repeats span residues 76 to 110 (NTIVMNSVLEACVHCGNIDLALRMFHEMAEPGGIG), 112 to 142 (DSISYATILKGLGKARRIDEAFQMLETIEYG), 151 to 181 (SSSLIYGLLDALINAGDLRRANGLLARYDIL), 189 to 223 (SVLIYNLLMKGYVNSESPQAAINLLDEMLRLRLEP), 224 to 254 (DRLTYNTLIHACIKCGDLDAAMKFFNDMKEK), 266 to 296 (DVVTYTTLVKGFGDATDLLSLQEIFLEMKLC), 302 to 337 (DRTAFTAVVDAMLKCGSTSGALCVFGEILKRSGANE), 342 to 376 (KPHLYLSMMRAFAVQGDYGMVRNLYLRLWPDSSGS), and 382 to 417 (QQEADNLLMEAALNDGQLDEALGILLSIVRRWKTIP). The region spanning 486 to 553 (VPIVDDRGSC…IVVHCGNFSG (68 aa)) is the CBS domain.

This sequence belongs to the PPR family. P subfamily.

The chain is Pentatricopeptide repeat-containing protein At5g10690 (CBSPPR1) from Arabidopsis thaliana (Mouse-ear cress).